Consider the following 332-residue polypeptide: Trans-2'-carboxybenzalpyruvate hydratase-aldolase (332 aa).

Catalysis depends on Lys-178, which acts as the Schiff-base intermediate with substrate.

This sequence belongs to the DapA family. As to quaternary structure, homotrimer.

It carries out the reaction (3Z)-4-(2-carboxyphenyl)-2-oxobut-3-enoate + H2O = 2-formylbenzoate + pyruvate. Not inhibited by sodium borohydride or sodium pyruvate. Unaffected by EDTA, EGTA, Mn(2+), Mg(2+) and Ca(2+). Its function is as follows. Plays a role in phenanthrene catabolism. Catalyzes the transformation of trans-2'-carboxbenzalpyruvate to 2-formylbenzoate and pyruvate. This is Trans-2'-carboxybenzalpyruvate hydratase-aldolase from Nocardioides sp. (strain KP7).